A 363-amino-acid chain; its full sequence is UDP-3-O-acylglucosamine N-acyltransferase (363 aa).

The Proton acceptor role is filled by histidine 266.

This sequence belongs to the transferase hexapeptide repeat family. LpxD subfamily. In terms of assembly, homotrimer.

It carries out the reaction a UDP-3-O-[(3R)-3-hydroxyacyl]-alpha-D-glucosamine + a (3R)-hydroxyacyl-[ACP] = a UDP-2-N,3-O-bis[(3R)-3-hydroxyacyl]-alpha-D-glucosamine + holo-[ACP] + H(+). It participates in bacterial outer membrane biogenesis; LPS lipid A biosynthesis. Its function is as follows. Catalyzes the N-acylation of UDP-3-O-acylglucosamine using 3-hydroxyacyl-ACP as the acyl donor. Is involved in the biosynthesis of lipid A, a phosphorylated glycolipid that anchors the lipopolysaccharide to the outer membrane of the cell. This is UDP-3-O-acylglucosamine N-acyltransferase from Bordetella pertussis (strain Tohama I / ATCC BAA-589 / NCTC 13251).